We begin with the raw amino-acid sequence, 219 residues long: Interleukin-12 subunit alpha (219 aa).

Residues 1–22 (MCPARSLLLVATLVLLDYLSLA) form the signal peptide. N-linked (GlcNAc...) asparagine glycans are attached at residues N24 and N93. Intrachain disulfides connect C37–C110, C64–C196, and C85–C123.

Belongs to the IL-6 superfamily. Heterodimer with IL12B; disulfide-linked. This heterodimer is known as interleukin IL-12. Heterodimer with EBI3/IL27B; not disulfide-linked. This heterodimer is known as interleukin IL-35. Interacts with NBR1; this interaction promotes IL-12 secretion.

It is found in the secreted. Heterodimerizes with IL12B to form the IL-12 cytokine or with EBI3/IL27B to form the IL-35 cytokine. IL-12 is primarily produced by professional antigen-presenting cells (APCs) such as B-cells and dendritic cells (DCs) as well as macrophages and granulocytes and regulates T-cell and natural killer-cell responses, induces the production of interferon-gamma (IFN-gamma), favors the differentiation of T-helper 1 (Th1) cells and is an important link between innate resistance and adaptive immunity. Mechanistically, exerts its biological effects through a receptor composed of IL12R1 and IL12R2 subunits. Binding to the receptor results in the rapid tyrosine phosphorylation of a number of cellular substrates including the JAK family kinases TYK2 and JAK2. In turn, recruited STAT4 gets phosphorylated and translocates to the nucleus where it regulates cytokine/growth factor responsive genes. As part of IL-35, plays essential roles in maintaining the immune homeostasis of the liver microenvironment and also functions as an immune-suppressive cytokine. Mediates biological events through unconventional receptors composed of IL12RB2 and gp130/IL6ST heterodimers or homodimers. Signaling requires the transcription factors STAT1 and STAT4, which form a unique heterodimer that binds to distinct DNA sites. This Papio anubis (Olive baboon) protein is Interleukin-12 subunit alpha (IL12A).